The sequence spans 382 residues: Na(+)/H(+) antiporter NhaA (382 aa).

10 helical membrane passes run 11 to 31 (FSVP…LDPA), 47 to 67 (FHFV…AVEI), 88 to 108 (LATL…NAII), 116 to 136 (GWGI…RLVF), 145 to 165 (FLLL…AVFY), 170 to 190 (HPTE…AYIL), 261 to 283 (IVVD…SSVG), 299 to 319 (LGIF…PQQV), 327 to 347 (TGLV…VAFV), and 353 to 373 (GSAK…IMLG).

The protein belongs to the NhaA Na(+)/H(+) (TC 2.A.33) antiporter family.

It is found in the cell inner membrane. It carries out the reaction Na(+)(in) + 2 H(+)(out) = Na(+)(out) + 2 H(+)(in). Its function is as follows. Na(+)/H(+) antiporter that extrudes sodium in exchange for external protons. This chain is Na(+)/H(+) antiporter NhaA, found in Geobacter sulfurreducens (strain ATCC 51573 / DSM 12127 / PCA).